Reading from the N-terminus, the 328-residue chain is MLEDYYPSTTSYYHGGIDDDLYTAKWGMVMTFLDLNDSSLTPFEGTHFALIGFKSDKGVYINNGRVGAVESPAAIRTQLAKFPWHLGNQVMVYDVGNIDGPNRSLEQLQNSLSKAIKRMCDFNLKPIVLGGGHETAYGHYLGLRQSLSPSDDLAVINMDAHFDLRPYGQTGPNSGTGFRQMFDDAVADKRLFKYFVLGIQEHNNNLFLFDFVAKSKGIQFLTGQDIYQMGHQKVCRAIDRFLEGQERVYLTIDMDCFSVGAAPGVSAIQSLGVDPNLAVLVLQHIAASGKLVGFDVVEVSPPHDIDNHTANLAATFIFYLVQIMAQHR.

Positions 133, 159, 161, 163, 253, and 255 each coordinate Mn(2+).

This sequence belongs to the arginase family. Mn(2+) is required as a cofactor.

It catalyses the reaction N-formimidoyl-L-glutamate + H2O = formamide + L-glutamate. It participates in amino-acid degradation; L-histidine degradation into L-glutamate; L-glutamate from N-formimidoyl-L-glutamate (hydrolase route): step 1/1. Functionally, catalyzes the conversion of N-formimidoyl-L-glutamate to L-glutamate and formamide. This is Formimidoylglutamase from Streptococcus pyogenes serotype M5 (strain Manfredo).